A 333-amino-acid polypeptide reads, in one-letter code: Biotin synthase (333 aa).

The 231-residue stretch at 51-281 folds into the Radical SAM core domain; the sequence is HFGNQVSLCG…DVHITICGGR (231 aa). Positions 69, 73, and 76 each coordinate [4Fe-4S] cluster. Cys206 contacts [2Fe-2S] cluster.

The protein belongs to the radical SAM superfamily. Biotin synthase family. In terms of assembly, homodimer. Requires [4Fe-4S] cluster as cofactor. [2Fe-2S] cluster is required as a cofactor.

It carries out the reaction (4R,5S)-dethiobiotin + (sulfur carrier)-SH + 2 reduced [2Fe-2S]-[ferredoxin] + 2 S-adenosyl-L-methionine = (sulfur carrier)-H + biotin + 2 5'-deoxyadenosine + 2 L-methionine + 2 oxidized [2Fe-2S]-[ferredoxin]. It functions in the pathway cofactor biosynthesis; biotin biosynthesis; biotin from 7,8-diaminononanoate: step 2/2. Catalyzes the conversion of dethiobiotin (DTB) to biotin by the insertion of a sulfur atom into dethiobiotin via a radical-based mechanism. The protein is Biotin synthase of Trichlorobacter lovleyi (strain ATCC BAA-1151 / DSM 17278 / SZ) (Geobacter lovleyi).